We begin with the raw amino-acid sequence, 353 residues long: Glutamine synthetase nodule isozyme (353 aa).

The GS beta-grasp domain maps to 19-99; the sequence is IIAEYIWVGG…VMCDTYTPAG (81 aa). Residues 106-353 form the GS catalytic domain; it reads KRHAAAKIFS…TSMIAETTLL (248 aa).

The protein belongs to the glutamine synthetase family. As to quaternary structure, homooctamer.

It is found in the cytoplasm. It catalyses the reaction L-glutamate + NH4(+) + ATP = L-glutamine + ADP + phosphate + H(+). The chain is Glutamine synthetase nodule isozyme from Lupinus luteus (European yellow lupine).